Reading from the N-terminus, the 272-residue chain is Glutamate racemase (272 aa).

Residues 10–11 (DS) and 42–43 (YG) each bind substrate. Residue Cys-73 is the Proton donor/acceptor of the active site. 74-75 (NT) lines the substrate pocket. Cys-183 acts as the Proton donor/acceptor in catalysis. 184 to 185 (TH) is a binding site for substrate.

Belongs to the aspartate/glutamate racemases family.

It catalyses the reaction L-glutamate = D-glutamate. The protein operates within cell wall biogenesis; peptidoglycan biosynthesis. In terms of biological role, provides the (R)-glutamate required for cell wall biosynthesis. This Leifsonia xyli subsp. xyli (strain CTCB07) protein is Glutamate racemase.